Here is a 407-residue protein sequence, read N- to C-terminus: Putative glucose/galactose transporter (407 aa).

A run of 12 helical transmembrane segments spans residues 11 to 31 (GSLT…DILI), 47 to 67 (LIQF…GNVI), 70 to 90 (IGYP…CALF), 96 to 116 (FGSY…IVCL), 139 to 159 (VQAF…LLIF), 180 to 200 (VQMP…VMYL), 225 to 245 (FVFG…IGSF), 263 to 283 (HYLV…SALM), 300 to 320 (IILI…ALTF), 321 to 341 (VGFF…LNLG), 349 to 369 (GVIS…GVVT), and 378 to 398 (NLLY…FFAL).

It belongs to the major facilitator superfamily. FHS transporter (TC 2.A.1.7) family.

The protein localises to the cell inner membrane. In terms of biological role, intake of glucose and galactose. The chain is Putative glucose/galactose transporter (gluP) from Helicobacter pylori (strain J99 / ATCC 700824) (Campylobacter pylori J99).